Here is a 947-residue protein sequence, read N- to C-terminus: MAASVSRAICVQKPGSKCTRDREATSFARRSVAAPRPPHAKAAGVIRSDSGAGRGQHCSPLRAVVDAAPIQTTKKRVFHFGKGKSEGNKTMKELLGGKGANLAEMASIGLSVPPGFTVSTEACQQYQDAGCALPAGLWAEIVDGLQWVEEYMGATLGDPQRPLLLSVRSGAAVSMPGMMDTVLNLGLNDEVAAGLAAKSGERFAYDSFRRFLDMFGNVVMDIPRSLFEEKLEHMKESKGLKNDTDLTASDLKELVGQYKEVYLSAKGEPFPSDPKKQLELAVLAVFNSWESPRAKKYRSINQITGLRGTAVNVQCMVFGNMGNTSGTGVLFTRNPNTGEKKLYGEFLVNAQGEDVVAGIRTPEDLDAMKNLMPQAYDELVENCNILESHYKEMQDIEFTVQENRLWMLQCRTGKRTGKSAVKIAVDMVNEGLVEPRSAIKMVEPGHLDQLLHPQFENPSAYKDQVIATGLPASPGAAVGQVVFTAEDAEAWHSQGKAAILVRAETSPEDVGGMHAAVGILTERGGMTSHAAVVARWWGKCCVSGCSGIRVNDAEKLVTIGSHVLREGEWLSLNGSTGEVILGKQPLSPPALSGDLGTFMAWVDDVRKLKVLANADTPDDALTARNNGAQGIGLCRTEHMFFASDERIKAVRQMIMAPTLELRQQALDRLLTYQRSDFEGIFRAMDGLPVTIRLLDHPSYEFLPEGNIEDIVSELCAETGANQEDALARIEKLSEVNPMLGFRGCRLGISYPELTEMQARAIFEAAIAMTNQGVQVFPEIMVPLVGTPQELGHQVTLIRQVAEKVFANVGKTIGYKVGTMIEIPRAALVADEIAEQAEFFSFGTNDLTQMTFGYSRDDVGKFIPVHLAQGILQHDPFEVLDQRGVGELVKFATERGRKARPNLKVGICGEHGGEPSSVAFFAKAGLDFVSCSPFRVPIARLAAAQVLV.

Residues 1-62 (MAASVSRAIC…GRGQHCSPLR (62 aa)) constitute a chloroplast transit peptide. The segment at 21–54 (DREATSFARRSVAAPRPPHAKAAGVIRSDSGAGR) is disordered. Alanine 63 carries the post-translational modification N-acetylalanine; partial. Phosphothreonine is present on threonine 309. Serine 506 is modified (phosphoserine). Threonine 527 carries the post-translational modification Phosphothreonine; by PDRP1. Serine 528 is subject to Phosphoserine; by PDRP1. Histidine 529 acts as the Tele-phosphohistidine intermediate in catalysis. Substrate-binding residues include arginine 635, arginine 692, glutamate 821, glycine 842, threonine 843, asparagine 844, and aspartate 845. Glutamate 821 is a binding site for Mg(2+). Aspartate 845 lines the Mg(2+) pocket. Cysteine 907 (proton donor) is an active-site residue.

It belongs to the PEP-utilizing enzyme family. As to quaternary structure, homotetramer. The cofactor is Mg(2+). Phosphorylation of Thr-527 in the dark inactivates the enzyme, dephosphorylation upon light stimulation reactivates the enzyme. More highly phosphorylated when grown under high rather than low light regimes (70 vs 900 umol photons/m-2/s). the degree of phosphorylation is strictly regulated by light intensity and the light/dark transition has no influence. Phosphorylated in both mesophyll and bundle sheath cells. The phosphorylation at Ser-528 may be important for the phosphorylation at Thr-527 and may also be regulated by light intensity. In terms of tissue distribution, isoform C4PPDKZM1 mainly localized in mesophyll cells and only a low level is found in bundle sheath cells. Isoform CYPPDKZM1 expressed in roots, stems and etiolated leaves.

It localises to the plastid. The protein localises to the chloroplast. It is found in the cytoplasm. It carries out the reaction pyruvate + phosphate + ATP = phosphoenolpyruvate + AMP + diphosphate + H(+). It functions in the pathway photosynthesis; C4 acid pathway. Activated by light-induced dephosphorylation. Inhibited by dark-induced phosphorylation. Both reactions are catalyzed by PDRP1. Inactivated by cold due to the dissociation of the homotetramer. Independent of circadian regulation. Formation of phosphoenolpyruvate, which is the primary acceptor of CO(2) in C4 and some Crassulacean acid metabolism plants. The polypeptide is Pyruvate, phosphate dikinase 1, chloroplastic (Zea mays (Maize)).